The sequence spans 909 residues: MPLRLDIKRKFAQRSERVKSVDLHPTEPWILASLYSGTVCIWNYQTQTITKSFEVTELPVRSAKFIPRKQWVVAGADDMYIRVYNYNTMDKVKVFEAHSDYIRCVAVHPTLPYVLSSSDDMLIKLWDWENGWACTQIFEGHSHYVMQVVFNPKDTNTFASASLDRTIKIWNLGSPDPNFTLDAHQKGVNCVDYFTGGDKPYLITGSDDHTAKVWDYQTKSCVQTLDGHTHNVSAVCFHPELPIIITGSEDGTVRIWHATTYRLENTLNYGLERVWAIGYIKSSRRVVIGYDEGTIMVKLGREIPVASMDSSGKIIWAKHNEIQTANIKSIGAGYEATDGERLPLSVKELGTCDLYPQSLKHNPNGRFVVVCGDGEYIIYTALAWRNRSFGSGLEFVWSSEGECAVRESSSKIKIFSKNFQERKSIRPTFSAEKIFGGTLLAMCSNDFICFYDWAECRLIQQIDVTVKNLYWAESGDLVAIASDTSFYILKYNRELVSSHFDSGRPTDEEGVEDAFEVLHENDERVRTGIWVGDCFIYNNSSWKLNYCVGGEVTTMYHLDRPMYLLGYIANQSRVYLVDKEFNVIGYTLLLSLIEYKTLVMRGDLDRANQILPTIPKEQHNNVAHFLESRGMIEDALEIATDPDYKFDLAIQLGRLEIAKEIAEEVQSESKWKQLGELAMSSGKLQLAEDCMKYAMDLSGLLLLYSSLGDAEGVSKLACLAKEQGKNNVAFLCLFTLGRLEDCLQLLVESNRIPEAALMARSYLPSKVSEIVALWREDLSKVNPKAAESLADPEEYSNLFEDWQVALSVEANTAETRGVYTAAENYPSHADKPSITLVEAFRNLQVEAEESLENGNIDHEVAEENGHVENEGDEEEQQEEEVNEEEGVVDADSTDGAVLVNGSEVLTPHP.

WD repeat units lie at residues 13-52 (QRSE…ITKS), 55-94 (VTEL…KVKV), 97-136 (AHSD…ACTQ), 140-180 (GHSH…PNFT), 183-224 (AHQK…CVQT), 227-266 (GHTH…LENT), 269-309 (YGLE…ASMD), 351-390 (TCDL…RSFG), and 461-501 (QIDV…SHFD). The interval 862 to 909 (EENGHVENEGDEEEQQEEEVNEEEGVVDADSTDGAVLVNGSEVLTPHP) is disordered. The segment covering 870–892 (EGDEEEQQEEEVNEEEGVVDADS) has biased composition (acidic residues).

This sequence belongs to the WD repeat COPB2 family. As to quaternary structure, oligomeric complex that consists of at least the alpha, beta, beta', gamma, delta, epsilon and zeta subunits.

The protein localises to the cytoplasm. The protein resides in the golgi apparatus membrane. It is found in the cytoplasmic vesicle. Its subcellular location is the COPI-coated vesicle membrane. Functionally, the coatomer is a cytosolic protein complex that binds to dilysine motifs and reversibly associates with Golgi non-clathrin-coated vesicles, which further mediate biosynthetic protein transport from the ER, via the Golgi up to the trans Golgi network. Coatomer complex is required for budding from Golgi membranes, and is essential for the retrograde Golgi-to-ER transport of dilysine-tagged proteins. This Arabidopsis thaliana (Mouse-ear cress) protein is Coatomer subunit beta'-3.